A 410-amino-acid chain; its full sequence is Thyroid hormone receptor alpha (410 aa).

A disordered region spans residues 1-32; the sequence is MEQKPSKVECGSDPEESSTRSPDGKRKRKNGQ. A modulating region spans residues 1–52; it reads MEQKPSKVECGSDPEESSTRSPDGKRKRKNGQCSLKTSMSGYIPSYLDKDEQ. Residues cysteine 53, cysteine 56, cysteine 70, cysteine 73, cysteine 91, cysteine 97, cysteine 107, and cysteine 110 each contribute to the Zn(2+) site. 2 NR C4-type zinc fingers span residues 53 to 73 and 91 to 115; these read CVVC…CEGC and CKYD…FKKC. Residues 53–127 constitute a DNA-binding region (nuclear receptor); that stretch reads CVVCGDKATG…VGMAMDLVLD (75 aa). Residues 163 to 407 form the NR LBD domain; it reads EEWDLIHVAT…PPLFLEVFED (245 aa). 3,3',5-triiodo-L-thyronine-binding residues include arginine 228 and serine 277.

This sequence belongs to the nuclear hormone receptor family. NR1 subfamily. As to quaternary structure, binds DNA as a dimer; homodimer and heterodimer with RXRB. Interacts with NCOA3 and NCOA6 coactivators, leading to a strong increase of transcription of target genes. Probably interacts with SFPQ. Interacts with C1D. Interacts with AKAP13. Interacts with TP53INP2. Interacts with PER2. Interacts with TACC1. The interaction with isoform alpha-1, but not alpha-2, is decreased in the presence of thyroid hormone T3.

The protein resides in the nucleus. It is found in the cytoplasm. Functionally, nuclear hormone receptor that can act as a repressor or activator of transcription. High affinity receptor for thyroid hormones, including triiodothyronine and thyroxine. The chain is Thyroid hormone receptor alpha (THRA) from Ovis aries (Sheep).